A 95-amino-acid chain; its full sequence is Aspartyl/glutamyl-tRNA(Asn/Gln) amidotransferase subunit C (95 aa).

The protein belongs to the GatC family. In terms of assembly, heterotrimer of A, B and C subunits.

It carries out the reaction L-glutamyl-tRNA(Gln) + L-glutamine + ATP + H2O = L-glutaminyl-tRNA(Gln) + L-glutamate + ADP + phosphate + H(+). The enzyme catalyses L-aspartyl-tRNA(Asn) + L-glutamine + ATP + H2O = L-asparaginyl-tRNA(Asn) + L-glutamate + ADP + phosphate + 2 H(+). In terms of biological role, allows the formation of correctly charged Asn-tRNA(Asn) or Gln-tRNA(Gln) through the transamidation of misacylated Asp-tRNA(Asn) or Glu-tRNA(Gln) in organisms which lack either or both of asparaginyl-tRNA or glutaminyl-tRNA synthetases. The reaction takes place in the presence of glutamine and ATP through an activated phospho-Asp-tRNA(Asn) or phospho-Glu-tRNA(Gln). This chain is Aspartyl/glutamyl-tRNA(Asn/Gln) amidotransferase subunit C, found in Halothermothrix orenii (strain H 168 / OCM 544 / DSM 9562).